The primary structure comprises 57 residues: COP9 signalosome complex subunit 9 (57 aa).

This sequence belongs to the CSN9 family. As to quaternary structure, component of the CSN complex, probably composed of cops1, cops2, cops3, cops4, cops5, cops6, cops7, cops8 and cops9.

The protein resides in the nucleus. It is found in the cytoplasm. Its subcellular location is the nucleoplasm. In terms of biological role, component of the COP9 signalosome complex (CSN), a complex involved in various cellular and developmental processes. The CSN complex is an essential regulator of the ubiquitin (Ubl) conjugation pathway by mediating the deneddylation of the cullin subunits of SCF-type E3 ligase complexes, leading to decrease the Ubl ligase activity. May play a role in cell proliferation. In Xenopus laevis (African clawed frog), this protein is COP9 signalosome complex subunit 9.